Consider the following 537-residue polypeptide: Protein disulfide isomerase-like 1-5 (537 aa).

The first 29 residues, Met1 to Ala29, serve as a signal peptide directing secretion. One can recognise a Thioredoxin 1 domain in the interval Leu58–Gly184. Cys106 (nucleophile) is an active-site residue. N-linked (GlcNAc...) asparagine glycosylation is found at Asn160, Asn364, and Asn416. The region spanning Leu380–Leu526 is the Thioredoxin 2 domain. Residues Cys447 and Cys450 each act as nucleophile in the active site. Cys447 and Cys450 are disulfide-bonded. The N-linked (GlcNAc...) asparagine glycan is linked to Asn530. The Prevents secretion from ER signature appears at Lys534–Leu537.

The protein belongs to the protein disulfide isomerase family. As to expression, widely expressed.

It localises to the endoplasmic reticulum lumen. It catalyses the reaction Catalyzes the rearrangement of -S-S- bonds in proteins.. Acts as a protein-folding catalyst that interacts with nascent polypeptides to catalyze the formation, isomerization, and reduction or oxidation of disulfide bonds. This is Protein disulfide isomerase-like 1-5 (PDIL1-5) from Arabidopsis thaliana (Mouse-ear cress).